Consider the following 810-residue polypeptide: Bifunctional aspartokinase/homoserine dehydrogenase 2 (810 aa).

The segment at 2–252 (SVIAQAGAKG…VKDACLLPLL (251 aa)) is aspartokinase. Residues 253–463 (RLDEASELAR…RAEKRIGLVL (211 aa)) form an interface region. The segment at 464 to 810 (FGKGNIGSRW…SDINRLAQLL (347 aa)) is homoserine dehydrogenase. Positions 468 and 469 each coordinate NADP(+). Positions 469 and 498 each coordinate NAD(+). Ile469 is a binding site for NADPH. Positions 501, 549, and 573 each coordinate NADP(+). Thr549 contributes to the NAD(+) binding site. NADPH contacts are provided by Thr549 and Lys573. Residues Val603, Ala605, and Leu607 each contribute to the Na(+) site. NADP(+)-binding residues include Gly658 and Glu661. Positions 661 and 672 each coordinate L-homoserine. The active-site Proton donor is the Lys676. Gly791 lines the NADP(+) pocket. Position 791 (Gly791) interacts with NAD(+). Gly791 serves as a coordination point for NADPH.

It in the N-terminal section; belongs to the aspartokinase family. In the C-terminal section; belongs to the homoserine dehydrogenase family. As to quaternary structure, homotetramer. It depends on a metal cation as a cofactor.

It carries out the reaction L-homoserine + NADP(+) = L-aspartate 4-semialdehyde + NADPH + H(+). It catalyses the reaction L-homoserine + NAD(+) = L-aspartate 4-semialdehyde + NADH + H(+). The enzyme catalyses L-aspartate + ATP = 4-phospho-L-aspartate + ADP. It functions in the pathway amino-acid biosynthesis; L-lysine biosynthesis via DAP pathway; (S)-tetrahydrodipicolinate from L-aspartate: step 1/4. The protein operates within amino-acid biosynthesis; L-methionine biosynthesis via de novo pathway; L-homoserine from L-aspartate: step 1/3. Its pathway is amino-acid biosynthesis; L-methionine biosynthesis via de novo pathway; L-homoserine from L-aspartate: step 3/3. It participates in amino-acid biosynthesis; L-threonine biosynthesis; L-threonine from L-aspartate: step 1/5. It functions in the pathway amino-acid biosynthesis; L-threonine biosynthesis; L-threonine from L-aspartate: step 3/5. Functionally, bifunctional aspartate kinase and homoserine dehydrogenase that catalyzes the first and the third steps toward the synthesis of lysine, methionine and threonine from aspartate. This is Bifunctional aspartokinase/homoserine dehydrogenase 2 (metL) from Escherichia coli (strain K12).